The chain runs to 265 residues: Transcriptional activator AggR (265 aa).

The region spanning 164–261 (DKVRNTIEKD…GITPKQFLTY (98 aa)) is the HTH araC/xylS-type domain. 2 consecutive DNA-binding regions (H-T-H motif) follow at residues 181–202 (AIIA…ESEY) and 228–251 (ISQI…VKHF).

In terms of assembly, homodimer.

Functionally, transcriptional activator of aggregative adherence fimbria I expression in enteroaggregative E.coli. This chain is Transcriptional activator AggR (aggR), found in Escherichia coli.